Reading from the N-terminus, the 498-residue chain is ATP synthase subunit beta, chloroplastic (498 aa).

Position 6 is a phosphothreonine (Thr-6). Residue Ser-13 is modified to Phosphoserine. 172 to 179 is an ATP binding site; sequence GGAGVGKT.

This sequence belongs to the ATPase alpha/beta chains family. In terms of assembly, F-type ATPases have 2 components, CF(1) - the catalytic core - and CF(0) - the membrane proton channel. CF(1) has five subunits: alpha(3), beta(3), gamma(1), delta(1), epsilon(1). CF(0) has four main subunits: a(1), b(1), b'(1) and c(9-12).

The protein localises to the plastid. It localises to the chloroplast thylakoid membrane. The enzyme catalyses ATP + H2O + 4 H(+)(in) = ADP + phosphate + 5 H(+)(out). In terms of biological role, produces ATP from ADP in the presence of a proton gradient across the membrane. The catalytic sites are hosted primarily by the beta subunits. In Olimarabidopsis pumila (Dwarf rocket), this protein is ATP synthase subunit beta, chloroplastic.